We begin with the raw amino-acid sequence, 151 residues long: Deoxyuridine 5'-triphosphate nucleotidohydrolase (151 aa).

Residues 70–72 (RSG), N83, 87–89 (LID), and M97 each bind substrate.

The protein belongs to the dUTPase family. Mg(2+) serves as cofactor.

It carries out the reaction dUTP + H2O = dUMP + diphosphate + H(+). It participates in pyrimidine metabolism; dUMP biosynthesis; dUMP from dCTP (dUTP route): step 2/2. Its function is as follows. This enzyme is involved in nucleotide metabolism: it produces dUMP, the immediate precursor of thymidine nucleotides and it decreases the intracellular concentration of dUTP so that uracil cannot be incorporated into DNA. The polypeptide is Deoxyuridine 5'-triphosphate nucleotidohydrolase (Azotobacter vinelandii (strain DJ / ATCC BAA-1303)).